A 234-amino-acid chain; its full sequence is MTIHIGARPDQIAETVLMPGDPYRARWAAQTFLDGAELVNEVRGMLGFTGTYKGNRVTIQGSGMGMPSLSIYANELISSYNAQTLIRIGSCGGMQPHVAVRDVIIAMSATTITSPSSGIFREVNFAPTAHYDLLAAAVTAAKAKGTRTHVGGIYSSDVFYAERPDLDEQMVRHGILGVEMEAAELYTLAARHNRRALAILTVSDHLQTGEALPAEDREQTFGDMVEIALEAAFA.

H4 lines the a purine D-ribonucleoside pocket. Phosphate is bound by residues G20, R24, R43, and 87 to 90 (RIGS). A purine D-ribonucleoside-binding positions include E162, 179–181 (EME), and 203–204 (SD). D204 (proton donor) is an active-site residue.

It belongs to the PNP/UDP phosphorylase family. As to quaternary structure, homohexamer; trimer of homodimers.

The enzyme catalyses a purine D-ribonucleoside + phosphate = a purine nucleobase + alpha-D-ribose 1-phosphate. It carries out the reaction a purine 2'-deoxy-D-ribonucleoside + phosphate = a purine nucleobase + 2-deoxy-alpha-D-ribose 1-phosphate. In terms of biological role, catalyzes the reversible phosphorolytic breakdown of the N-glycosidic bond in the beta-(deoxy)ribonucleoside molecules, with the formation of the corresponding free purine bases and pentose-1-phosphate. The protein is Purine nucleoside phosphorylase DeoD-type of Roseobacter denitrificans (strain ATCC 33942 / OCh 114) (Erythrobacter sp. (strain OCh 114)).